We begin with the raw amino-acid sequence, 484 residues long: MTLRLHDSRTQSLRDFVPLVDGRVGIYVCGPTVQSAPHIGHLRSALAYDQLRRWLTHRGLDVTLVRNVTDIDDKVIDNARRGQEAGGTEEWWALAYRVELEFSRAYSALGILPPSYEPRATASIGEMQEIIRRLVERGHAYAADDRSGDVYFDTASWPEYGELTRQRAADMEAAADADPRAKRDVRDFALWKGAKPGEPASASWPSPWGSGRPGWHIECSAMSTRYLGAEFDIHGGGLDLRFPHHENELAQSRAAGDPFARYWLHNGLVAVAGQKMSKSLGNSLFAADLLASARPVVVRYFLGSAHYRSTLEFHDGALAEAEAALDRIETFLDRSARRLAGTRFQAAPAAPDGSPAAVPDEFAEAMDDDLSVPQALAVLHDAVRAGNAALDAGDLQEAASLRADVSAMVAVLGIDPLADEWRTASDQPARRALQALVEHRIAERQTAREARDFALADRIRQELAEAGITIEDSPGGSHWSIDGE.

Residue C29 participates in Zn(2+) binding. Residues 31–41 (PTVQSAPHIGH) carry the 'HIGH' region motif. Residues C219, H244, and E248 each contribute to the Zn(2+) site. The 'KMSKS' region signature appears at 275 to 279 (KMSKS). An ATP-binding site is contributed by K278.

The protein belongs to the class-I aminoacyl-tRNA synthetase family. As to quaternary structure, monomer. Requires Zn(2+) as cofactor.

Its subcellular location is the cytoplasm. The catalysed reaction is tRNA(Cys) + L-cysteine + ATP = L-cysteinyl-tRNA(Cys) + AMP + diphosphate. The chain is Cysteine--tRNA ligase from Clavibacter michiganensis subsp. michiganensis (strain NCPPB 382).